Consider the following 150-residue polypeptide: UPF0178 protein PP_5221 (150 aa).

Belongs to the UPF0178 family.

In Pseudomonas putida (strain ATCC 47054 / DSM 6125 / CFBP 8728 / NCIMB 11950 / KT2440), this protein is UPF0178 protein PP_5221.